The sequence spans 419 residues: Appendage-associated protein (419 aa).

The first 39 residues, 1 to 39, serve as a signal peptide directing secretion; the sequence is MIVTYGTVGCPVSRGGSPGCGRRIAEELRLAEDARLRLA. The stretch at 232–262 forms a coiled coil; sequence ERQKAQRRREERAAKAREELRKELNDIDAKW.

Its subcellular location is the secreted. Associates with actin filament appendages that are formed in the inclusion appendages of the parasitophorous vacuole during infection of the host erythrocyte. This is Appendage-associated protein from Anaplasma marginale (strain St. Maries).